The following is a 386-amino-acid chain: Glucose-1-phosphate adenylyltransferase (386 aa).

Residues Tyr99, Gly164, 179–180 (EK), and Ser190 each bind alpha-D-glucose 1-phosphate.

Belongs to the bacterial/plant glucose-1-phosphate adenylyltransferase family. Homotetramer.

It carries out the reaction alpha-D-glucose 1-phosphate + ATP + H(+) = ADP-alpha-D-glucose + diphosphate. It participates in glycan biosynthesis; glycogen biosynthesis. Involved in the biosynthesis of ADP-glucose, a building block required for the elongation reactions to produce glycogen. Catalyzes the reaction between ATP and alpha-D-glucose 1-phosphate (G1P) to produce pyrophosphate and ADP-Glc. The polypeptide is Glucose-1-phosphate adenylyltransferase (Clostridioides difficile (strain 630) (Peptoclostridium difficile)).